The sequence spans 77 residues: RNA-binding protein Hfq (77 aa).

The Sm domain occupies 10-70 (DAFLNHVRKA…ISTIMPGQPI (61 aa)).

This sequence belongs to the Hfq family. As to quaternary structure, homohexamer.

Its function is as follows. RNA chaperone that binds small regulatory RNA (sRNAs) and mRNAs to facilitate mRNA translational regulation in response to envelope stress, environmental stress and changes in metabolite concentrations. Also binds with high specificity to tRNAs. In Cereibacter sphaeroides (strain ATCC 17029 / ATH 2.4.9) (Rhodobacter sphaeroides), this protein is RNA-binding protein Hfq.